The primary structure comprises 215 residues: 3-demethoxyubiquinol 3-hydroxylase (215 aa).

Positions 26 to 47 (PSSAHSQRPSPAVVQPEHKMSE) are disordered. 6 residues coordinate Fe cation: glutamate 64, glutamate 94, histidine 97, glutamate 146, glutamate 178, and histidine 181.

This sequence belongs to the COQ7 family. It depends on Fe cation as a cofactor.

The protein localises to the cell membrane. It catalyses the reaction a 5-methoxy-2-methyl-3-(all-trans-polyprenyl)benzene-1,4-diol + AH2 + O2 = a 3-demethylubiquinol + A + H2O. Its pathway is cofactor biosynthesis; ubiquinone biosynthesis. Functionally, catalyzes the hydroxylation of 2-nonaprenyl-3-methyl-6-methoxy-1,4-benzoquinol during ubiquinone biosynthesis. The protein is 3-demethoxyubiquinol 3-hydroxylase of Pseudomonas syringae pv. syringae (strain B728a).